A 469-amino-acid polypeptide reads, in one-letter code: Aspartyl/glutamyl-tRNA(Asn/Gln) amidotransferase subunit B (469 aa).

The protein belongs to the GatB/GatE family. GatB subfamily. In terms of assembly, heterotrimer of A, B and C subunits.

The enzyme catalyses L-glutamyl-tRNA(Gln) + L-glutamine + ATP + H2O = L-glutaminyl-tRNA(Gln) + L-glutamate + ADP + phosphate + H(+). It catalyses the reaction L-aspartyl-tRNA(Asn) + L-glutamine + ATP + H2O = L-asparaginyl-tRNA(Asn) + L-glutamate + ADP + phosphate + 2 H(+). Functionally, allows the formation of correctly charged Asn-tRNA(Asn) or Gln-tRNA(Gln) through the transamidation of misacylated Asp-tRNA(Asn) or Glu-tRNA(Gln) in organisms which lack either or both of asparaginyl-tRNA or glutaminyl-tRNA synthetases. The reaction takes place in the presence of glutamine and ATP through an activated phospho-Asp-tRNA(Asn) or phospho-Glu-tRNA(Gln). The protein is Aspartyl/glutamyl-tRNA(Asn/Gln) amidotransferase subunit B of Thermus thermophilus (strain ATCC 27634 / DSM 579 / HB8).